Reading from the N-terminus, the 428-residue chain is MAENGDKEQKLDSDTKICEQIEYYFGDHNLPRDKFLKQQILLDDGWVPLETMIKFNRLSKLTTDFNTILQALKKSKTELLEINEEKCKIRRSPAKPLPELNDEYKNSLKHKSVYIKGFPTSAILDDVKEWLKDKGPIENIQMRRTLQREFKGSIFIIFNTDDDAKKFLENRNLKYKDNDMTVLSREEYHAKKNEERKLNKSEEKAKSKQVKKEAQKQAEDAERKLVEERVGSLLKFSGDLDNMTSREDLHALFQTHGDIEWIDFSRGAKEGIVLFKMNAKEALDKAKAANSDNLKLKGKDVKWELIEGDTEKEALKKILEGKQESFNKRKGRDGRKFKGKGRGGKGNDSSSRKRTQFQGKKKTFDSSDDEDDMEESESPQKASVKAEESAGTKNGAAAAPGSPKKRSLDDKAEDGPAVKQSKTEVGDQ.

One can recognise an HTH La-type RNA-binding domain in the interval 7-99; that stretch reads KEQKLDSDTK…RRSPAKPLPE (93 aa). Residues 111–203 form the RRM domain; it reads KSVYIKGFPT…EERKLNKSEE (93 aa). Disordered stretches follow at residues 187–223 and 323–428; these read EYHA…DAER and QESF…VGDQ. 2 short sequence motifs (nuclear localization signal) span residues 196–212 and 316–332; these read RKLN…QVKK and KKIL…RKGR. The xRRM domain maps to 227 to 349; that stretch reads EERVGSLLKF…KGRGGKGNDS (123 aa). Basic residues-rich tracts occupy residues 328-343 and 352-361; these read KRKG…KGRG and RKRTQFQGKK. Acidic residues predominate over residues 366-377; the sequence is SSDDEDDMEESE. The segment covering 406 to 428 has biased composition (basic and acidic residues); it reads RSLDDKAEDGPAVKQSKTEVGDQ.

In terms of processing, phosphorylated.

The protein resides in the nucleus. Functionally, la protein plays a role in the transcription of RNA polymerase III. It is most probably a transcription termination factor. Binds to the 3' termini of virtually all nascent polymerase III transcripts. The chain is Lupus La protein homolog A (ssb-a) from Xenopus laevis (African clawed frog).